A 131-amino-acid polypeptide reads, in one-letter code: Proline-rich protein 3 (131 aa).

Residues 1–77 are disordered; sequence LHRGPPGSRG…KEQRNPRRLK (77 aa). A compositionally biased stretch (pro residues) spans 12 to 25; it reads MIPPLLSLPPPPRG. The span at 28 to 44 shows a compositional bias: gly residues; it reads PLRGGLGPRSGPYGRGW. The segment at 98 to 126 adopts a C3H1-type zinc-finger fold; sequence KSDRPVCRHFAKKGHCRYEDLCAFYHPGA.

In Sus scrofa (Pig), this protein is Proline-rich protein 3 (PRR3).